The following is a 542-amino-acid chain: Putative cysteine ligase BshC (542 aa).

Residues 458–487 (VAKNAAIIQAQIEFLQQTLERALLSKHEVE) are a coiled coil.

The protein belongs to the BshC family.

In terms of biological role, involved in bacillithiol (BSH) biosynthesis. May catalyze the last step of the pathway, the addition of cysteine to glucosamine malate (GlcN-Mal) to generate BSH. The sequence is that of Putative cysteine ligase BshC from Geobacillus thermodenitrificans (strain NG80-2).